The chain runs to 167 residues: NAD(P)H-quinone oxidoreductase subunit I, chloroplastic (167 aa).

2 4Fe-4S ferredoxin-type domains span residues 55-84 (GRIHFEFDKCIACEVCVRVCPIDLPVVDWK) and 95-124 (LNYSIDFGICIFCGNCVEYCPTNCLSMTEE). The [4Fe-4S] cluster site is built by cysteine 64, cysteine 67, cysteine 70, cysteine 74, cysteine 104, cysteine 107, cysteine 110, and cysteine 114.

Belongs to the complex I 23 kDa subunit family. As to quaternary structure, NDH is composed of at least 16 different subunits, 5 of which are encoded in the nucleus. Requires [4Fe-4S] cluster as cofactor.

It is found in the plastid. The protein localises to the chloroplast thylakoid membrane. It catalyses the reaction a plastoquinone + NADH + (n+1) H(+)(in) = a plastoquinol + NAD(+) + n H(+)(out). The catalysed reaction is a plastoquinone + NADPH + (n+1) H(+)(in) = a plastoquinol + NADP(+) + n H(+)(out). Its function is as follows. NDH shuttles electrons from NAD(P)H:plastoquinone, via FMN and iron-sulfur (Fe-S) centers, to quinones in the photosynthetic chain and possibly in a chloroplast respiratory chain. The immediate electron acceptor for the enzyme in this species is believed to be plastoquinone. Couples the redox reaction to proton translocation, and thus conserves the redox energy in a proton gradient. In Panax ginseng (Korean ginseng), this protein is NAD(P)H-quinone oxidoreductase subunit I, chloroplastic.